A 319-amino-acid chain; its full sequence is Pectinesterase (319 aa).

Gln-1 carries the pyrrolidone carboxylic acid modification. Substrate-binding residues include Thr-83 and Gln-113. Asp-136 acts as the Proton donor in catalysis. A disulfide bridge connects residues Cys-150 and Cys-170. Asp-157 acts as the Nucleophile in catalysis. Positions 225 and 227 each coordinate substrate.

Belongs to the pectinesterase family.

The protein localises to the secreted. It localises to the cell wall. It catalyses the reaction [(1-&gt;4)-alpha-D-galacturonosyl methyl ester](n) + n H2O = [(1-&gt;4)-alpha-D-galacturonosyl](n) + n methanol + n H(+). The protein operates within glycan metabolism; pectin degradation; 2-dehydro-3-deoxy-D-gluconate from pectin: step 1/5. Catalyzes the deesterification of methyl-esterified D-galactosiduronic acid units in pectic compounds. It participates in modulating cell wall during fruit ripening, cell wall extension during pollen germination, and in defense mechanisms against pathogens. This is Pectinesterase from Daucus carota (Wild carrot).